Here is a 499-residue protein sequence, read N- to C-terminus: Guanosine-5'-triphosphate,3'-diphosphate pyrophosphatase (499 aa).

It belongs to the GppA/Ppx family. GppA subfamily.

It carries out the reaction guanosine 3'-diphosphate 5'-triphosphate + H2O = guanosine 3',5'-bis(diphosphate) + phosphate + H(+). Its pathway is purine metabolism; ppGpp biosynthesis; ppGpp from GTP: step 2/2. Functionally, catalyzes the conversion of pppGpp to ppGpp. Guanosine pentaphosphate (pppGpp) is a cytoplasmic signaling molecule which together with ppGpp controls the 'stringent response', an adaptive process that allows bacteria to respond to amino acid starvation, resulting in the coordinated regulation of numerous cellular activities. The polypeptide is Guanosine-5'-triphosphate,3'-diphosphate pyrophosphatase (Klebsiella pneumoniae subsp. pneumoniae (strain ATCC 700721 / MGH 78578)).